Consider the following 204-residue polypeptide: MNRLEIENQLWEEGYESIAGCDEVGRGCLFGSVLAATVILPKGLLIEGVKDSKKLSPKRREELYEVIKKNAIAMGVGIISAEVIDQINIRQASRLAMKKSVLSLTTIDGESKIPDYILVDAENIDIAIPQSAIIKGDDRSQGIAAASIVAKVIRDRLCIRWDEEYPNYGIAQHKGYGTKLHREALLKYGPSELHRRSFLKKILK.

Residues glutamate 16–lysine 204 enclose the RNase H type-2 domain. A divalent metal cation contacts are provided by aspartate 22, glutamate 23, and aspartate 120.

This sequence belongs to the RNase HII family. Requires Mn(2+) as cofactor. Mg(2+) serves as cofactor.

The protein resides in the cytoplasm. It carries out the reaction Endonucleolytic cleavage to 5'-phosphomonoester.. Its function is as follows. Endonuclease that specifically degrades the RNA of RNA-DNA hybrids. The sequence is that of Ribonuclease HII from Alkaliphilus metalliredigens (strain QYMF).